The sequence spans 505 residues: Glutamate--tRNA ligase (505 aa).

Residues 12–22 carry the 'HIGH' region motif; it reads PSPTGDPHVGT. Positions 253–257 match the 'KMSKS' region motif; it reads KLSKR. Lys256 is an ATP binding site.

Belongs to the class-I aminoacyl-tRNA synthetase family. Glutamate--tRNA ligase type 1 subfamily. In terms of assembly, monomer.

The protein resides in the cytoplasm. It catalyses the reaction tRNA(Glu) + L-glutamate + ATP = L-glutamyl-tRNA(Glu) + AMP + diphosphate. Its function is as follows. Catalyzes the attachment of glutamate to tRNA(Glu) in a two-step reaction: glutamate is first activated by ATP to form Glu-AMP and then transferred to the acceptor end of tRNA(Glu). This Chlamydophila psittaci (strain ATCC VR-125 / 6BC) (Chlamydia psittaci) protein is Glutamate--tRNA ligase.